The primary structure comprises 450 residues: tRNA-2-methylthio-N(6)-dimethylallyladenosine synthase (450 aa).

An MTTase N-terminal domain is found at 14 to 132 (GEFFIETWGC…FPNYLNEVKK (119 aa)). [4Fe-4S] cluster-binding residues include Cys23, Cys59, Cys93, Cys169, Cys173, and Cys176. The 231-residue stretch at 155–385 (RKNSMKAFVT…VEVVNEISAK (231 aa)) folds into the Radical SAM core domain. Residues 388–450 (KAYEGKIEEV…NSFSLTGEEI (63 aa)) enclose the TRAM domain.

It belongs to the methylthiotransferase family. MiaB subfamily. As to quaternary structure, monomer. [4Fe-4S] cluster is required as a cofactor.

It is found in the cytoplasm. It carries out the reaction N(6)-dimethylallyladenosine(37) in tRNA + (sulfur carrier)-SH + AH2 + 2 S-adenosyl-L-methionine = 2-methylsulfanyl-N(6)-dimethylallyladenosine(37) in tRNA + (sulfur carrier)-H + 5'-deoxyadenosine + L-methionine + A + S-adenosyl-L-homocysteine + 2 H(+). Functionally, catalyzes the methylthiolation of N6-(dimethylallyl)adenosine (i(6)A), leading to the formation of 2-methylthio-N6-(dimethylallyl)adenosine (ms(2)i(6)A) at position 37 in tRNAs that read codons beginning with uridine. In Clostridium botulinum (strain Loch Maree / Type A3), this protein is tRNA-2-methylthio-N(6)-dimethylallyladenosine synthase.